Here is a 233-residue protein sequence, read N- to C-terminus: MADS-box transcription factor 20 (233 aa).

Residues 1–61 (MGRGKVQVRR…GNLFHYASSH (61 aa)) enclose the MADS-box domain. One can recognise a K-box domain in the interval 91–184 (EGSMSYDHIK…PTKAAAPPAC (94 aa)).

As to expression, expressed in developing seeds and seedling shoots.

It localises to the nucleus. Functionally, probable transcription factor. The chain is MADS-box transcription factor 20 (MADS20) from Oryza sativa subsp. japonica (Rice).